A 278-amino-acid polypeptide reads, in one-letter code: Phosphoenolpyruvate carboxylase kinase 2 (278 aa).

The 259-residue stretch at 11-269 folds into the Protein kinase domain; sequence YQLCDEIGRG…AEDALRHSWM (259 aa). ATP-binding positions include 17 to 25 and K40; that span reads IGRGRFGTI. D137 functions as the Proton acceptor in the catalytic mechanism.

Belongs to the protein kinase superfamily. Ser/Thr protein kinase family. Expressed in flowers and roots, and at lower levels in cauline leaves. Barely detectable in rosette leaves and stems.

The catalysed reaction is L-seryl-[protein] + ATP = O-phospho-L-seryl-[protein] + ADP + H(+). The enzyme catalyses L-threonyl-[protein] + ATP = O-phospho-L-threonyl-[protein] + ADP + H(+). In terms of biological role, calcium-independent kinase involved in light-dependent phosphoenolpyruvate carboxylase phosphorylation. In Arabidopsis thaliana (Mouse-ear cress), this protein is Phosphoenolpyruvate carboxylase kinase 2 (PPCK2).